We begin with the raw amino-acid sequence, 200 residues long: Insulin, isoform 2 (200 aa).

The tract at residues 148 to 200 (EVDSSPQPQGSESLPAQPPAQPAPQPEPQQAREPSPEVSCCGLWPRRPQRSQN) is disordered. Positions 163 to 174 (AQPPAQPAPQPE) are enriched in pro residues. The segment covering 175 to 184 (PQQAREPSPE) has biased composition (low complexity).

In terms of tissue distribution, expressed in pancreas, eye and, to a lower extent, in limb.

This Homo sapiens (Human) protein is Insulin, isoform 2 (INS-IGF2).